Consider the following 534-residue polypeptide: Nuclear hormone receptor FTZ-F1 (534 aa).

Residues 86-161 (EELCPVCGDK…VGMKLEAVRA (76 aa)) constitute a DNA-binding region (nuclear receptor). 2 NR C4-type zinc fingers span residues 89–109 (CPVC…CESC) and 125–149 (CVAE…FQKC). Residues 227 to 246 (VSSLTSSPESSPGPALLGAQ) show a composition bias toward low complexity. A disordered region spans residues 227 to 296 (VSSLTSSPES…SSTAEATSTE (70 aa)). The span at 247-256 (PQPPQPPPPP) shows a compositional bias: pro residues. Low complexity predominate over residues 278-296 (TQSNTAATPSSTAEATSTE). Positions 299–531 (RVSPMIREFV…TLLMEMLHAK (233 aa)) constitute an NR LBD domain.

Belongs to the nuclear hormone receptor family. NR5 subfamily. As to expression, present in all tissues examined.

It localises to the nucleus. Functionally, may play an important role in development. In Bombyx mori (Silk moth), this protein is Nuclear hormone receptor FTZ-F1 (FTZ-F1).